Reading from the N-terminus, the 626-residue chain is Protein ALEX (626 aa).

4 disordered regions span residues 1–29 (MMAR…LEPM), 173–223 (TTAH…AAHP), 236–473 (AAPG…APRS), and 556–612 (AASV…NNSR). 2 stretches are compositionally biased toward polar residues: residues 186–195 (KSTAAASSRQ) and 255–270 (GSTT…QSRL). Residues 281–312 (QIRESEQRDPQLRRKQQRWKEPLMPRREEKYP) are compositionally biased toward basic and acidic residues. Residues 337 to 346 (QPILTPGQPQ) are compositionally biased toward low complexity. Residues 366-399 (IPTPGQPLPPQPIPTPGRPLTPQPIPTPGRPLTP) show a composition bias toward pro residues. Residues 416–435 (RLLRPGQPMSPQLRQTQGLP) are compositionally biased toward low complexity. Positions 436-445 (LPQPLLPPGQ) are enriched in pro residues. The segment covering 570-579 (ALSRSRRYPW) has biased composition (basic residues). The segment covering 600–611 (RRNAVSSSTNNS) has biased composition (polar residues).

This sequence belongs to the ALEX family. In terms of assembly, interacts with the N-terminal region of the XLas isoforms of guanine nucleotide-binding protein G(s) subunit alpha.

The protein localises to the cell membrane. Its subcellular location is the cell projection. It localises to the ruffle. Its function is as follows. May inhibit the adenylyl cyclase-stimulating activity of guanine nucleotide-binding protein G(s) subunit alpha which is produced from the same locus in a different open reading frame. The sequence is that of Protein ALEX from Homo sapiens (Human).